The following is a 54-amino-acid chain: uncharacterized protein (54 aa).

2 stretches are compositionally biased toward basic and acidic residues: residues 1 to 19 and 26 to 54; these read MTEK…HNDL and EELK…YDTK. Positions 1–54 are disordered; that stretch reads MTEKKQQNKPNENPEHNDLTDPIPNEELKENMNDEKHKRQQRDNSQSERDYDTK.

This is an uncharacterized protein from Bacillus subtilis (strain 168).